Consider the following 298-residue polypeptide: Urease accessory protein UreD (298 aa).

It belongs to the UreD family. In terms of assembly, ureD, UreF and UreG form a complex that acts as a GTP-hydrolysis-dependent molecular chaperone, activating the urease apoprotein by helping to assemble the nickel containing metallocenter of UreC. The UreE protein probably delivers the nickel.

Its subcellular location is the cytoplasm. In terms of biological role, required for maturation of urease via the functional incorporation of the urease nickel metallocenter. This chain is Urease accessory protein UreD, found in Frankia alni (strain DSM 45986 / CECT 9034 / ACN14a).